Reading from the N-terminus, the 707-residue chain is Choline transporter-like protein 4 (707 aa).

Over 1 to 27 (MASEEYGEPAKHDPSFKGPIKKRGCTD) the chain is Cytoplasmic. Residues 28–48 (IICCVLFMVFLLGYMVVGILA) traverse the membrane as a helical segment. Residues 49-225 (WLYGDPRQVI…KIFEDFAKSW (177 aa)) are Extracellular-facing. N-linked (GlcNAc...) asparagine glycans are attached at residues Asn62, Asn140, Asn176, Asn191, and Asn196. Residues 226-246 (PWIITALVIAMVVSLLFLILL) traverse the membrane as a helical segment. At 247-249 (RFT) the chain is on the cytoplasmic side. The helical transmembrane segment at 250–270 (AGILVWVLIVGVIGVIGYGIY) threads the bilayer. Residues 271-305 (HCYMEYDTLNKQGVSVSDVGFTFNLGVYFRVKETW) lie on the Extracellular side of the membrane. Residues 306–326 (LAILIVLAVVEAILLLVLLFL) form a helical membrane-spanning segment. Residues 327-354 (RKRILIAIALIKEASKAIGHIMSSLFYP) lie on the Cytoplasmic side of the membrane. Residues 355-375 (LVTFVLLVVCVAYWGMTALYL) traverse the membrane as a helical segment. The Extracellular portion of the chain corresponds to 376–442 (ATSGAPIYRI…TNLFNLQIYN (67 aa)). 3 N-linked (GlcNAc...) asparagine glycosylation sites follow: Asn389, Asn397, and Asn401. Residues 443–463 (VIGFLWCINFVIALGQCVLAG) traverse the membrane as a helical segment. Over 464–494 (AFASYYWAFHKPKDIPFFPVAESFMRTLRYH) the chain is Cytoplasmic. A helical transmembrane segment spans residues 495 to 515 (TGSLAFGSLILTIVQLIRIIL). Over 516 to 556 (EYVDHKLKGAQNPCTRFLLCCLKCCFWCLEKFIKFLNRNAY) the chain is Extracellular. The chain crosses the membrane as a helical span at residues 557–577 (IMIAVYGKNFCVSAKNAFKLL). The Cytoplasmic portion of the chain corresponds to 578 to 593 (MRNIVRVVVLDKVTDL). The helical transmembrane segment at 594–614 (LIFFGKLIVVGGVGVLAFFFF) threads the bilayer. Residues 615–633 (SGRIPIPNDSFKSPTLNYY) are Extracellular-facing. A glycan (N-linked (GlcNAc...) asparagine) is linked at Asn622. A helical transmembrane segment spans residues 634-654 (WIPIITVVLGSYMIAHGFFSV). Residues 655–707 (YNMCVDTLFLCFLEDLERNDGSQEKPYYMSKSLMSILNKKNRPPKSEEKKKKK) are Cytoplasmic-facing.

It belongs to the CTL (choline transporter-like) family.

It localises to the membrane. The protein localises to the apical cell membrane. It carries out the reaction choline(out) + n H(+)(in) = choline(in) + n H(+)(out). The enzyme catalyses thiamine diphosphate(out) = thiamine diphosphate(in). Its function is as follows. Choline transporter that seems to play a role in the choline-acetylcholine system and is required to the efferent innervation of hair cells in the olivocochlear bundle for the maintenance of physiological function of outer hair cells and the protection of hair cells from acoustic injury. Also described as a thiamine pyrophosphate transporter. Also described as a thiamine pyrophosphate transporter. The chain is Choline transporter-like protein 4 (slc44a4) from Xenopus laevis (African clawed frog).